A 324-amino-acid chain; its full sequence is Alkanal monooxygenase beta chain (324 aa).

The protein belongs to the bacterial luciferase oxidoreductase family. Heterodimer of an alpha and a beta chain.

It carries out the reaction a long-chain fatty aldehyde + FMNH2 + O2 = a long-chain fatty acid + hnu + FMN + H2O + 2 H(+). Light-emitting reaction in luminous bacteria. The specific role of the beta subunit is unknown, but it is absolutely required for bioluminescence activity. The polypeptide is Alkanal monooxygenase beta chain (luxB) (Photorhabdus laumondii subsp. laumondii (strain DSM 15139 / CIP 105565 / TT01) (Photorhabdus luminescens subsp. laumondii)).